Here is a 508-residue protein sequence, read N- to C-terminus: uncharacterized protein (508 aa).

Transmembrane regions (helical) follow at residues 65-87 (IFPV…SYAV), 104-124 (WSGT…SLLL), 136-156 (FLVI…PGFI), 160-180 (VLLG…TAQW), 192-212 (VWVA…YGLA), 224-244 (LIFI…LAVV), 292-312 (TWIM…IGTF), 333-353 (LPAG…SLFI), 357-377 (MVLA…LSFA), 384-404 (LAGY…FAII), 416-436 (TVGV…PQTF), and 450-470 (TMVG…YVNW).

It belongs to the major facilitator superfamily. Allantoate permease family.

It localises to the endoplasmic reticulum. The protein localises to the golgi apparatus. The protein resides in the membrane. This is an uncharacterized protein from Schizosaccharomyces pombe (strain 972 / ATCC 24843) (Fission yeast).